A 494-amino-acid chain; its full sequence is Guanosine-5'-triphosphate,3'-diphosphate pyrophosphatase (494 aa).

This sequence belongs to the GppA/Ppx family. GppA subfamily.

It carries out the reaction guanosine 3'-diphosphate 5'-triphosphate + H2O = guanosine 3',5'-bis(diphosphate) + phosphate + H(+). Its pathway is purine metabolism; ppGpp biosynthesis; ppGpp from GTP: step 2/2. Its function is as follows. Catalyzes the conversion of pppGpp to ppGpp. Guanosine pentaphosphate (pppGpp) is a cytoplasmic signaling molecule which together with ppGpp controls the 'stringent response', an adaptive process that allows bacteria to respond to amino acid starvation, resulting in the coordinated regulation of numerous cellular activities. This Citrobacter koseri (strain ATCC BAA-895 / CDC 4225-83 / SGSC4696) protein is Guanosine-5'-triphosphate,3'-diphosphate pyrophosphatase.